Here is a 378-residue protein sequence, read N- to C-terminus: Beta-1,3-galactosyltransferase 4 (378 aa).

At 1–8 the chain is on the cytoplasmic side; that stretch reads MQLRLFRR. Residues 9 to 19 traverse the membrane as a helical; Signal-anchor for type II membrane protein segment; it reads LLLAALLLVIV. Residues 20-378 are Lumenal-facing; sequence WTLFGPSGLG…RCRAIAWLQS (359 aa). An N-linked (GlcNAc...) asparagine glycan is attached at Asn149.

This sequence belongs to the glycosyltransferase 31 family. Highly expressed in heart, skeletal muscle and pancreas and, to a lesser extent, in brain, placenta, kidney, liver and lung.

It localises to the golgi apparatus membrane. The enzyme catalyses a ganglioside GM2 (d18:1(4E)) + UDP-alpha-D-galactose = a ganglioside GM1 (d18:1(4E)) + UDP + H(+). It carries out the reaction a ganglioside GM2 + UDP-alpha-D-galactose = a ganglioside GM1 + UDP + H(+). It catalyses the reaction a ganglioside GD2 (d18:1(4E)) + UDP-alpha-D-galactose = a ganglioside GD1b (d18:1(4E)) + UDP + H(+). The catalysed reaction is a ganglioside GA2 (d18:1(4E)) + UDP-alpha-D-galactose = a ganglioside GA1 (d18:1(4E)) + UDP + H(+). It participates in protein modification; protein glycosylation. In terms of biological role, involved in GM1/GD1B/GA1 ganglioside biosynthesis. The polypeptide is Beta-1,3-galactosyltransferase 4 (Homo sapiens (Human)).